Consider the following 166-residue polypeptide: Small ribosomal subunit protein uS5 (166 aa).

The region spanning 11–74 is the S5 DRBM domain; that stretch reads LNEKLIAVNR…EKARRNMFTI (64 aa).

It belongs to the universal ribosomal protein uS5 family. Part of the 30S ribosomal subunit. Contacts proteins S4 and S8.

In terms of biological role, with S4 and S12 plays an important role in translational accuracy. Functionally, located at the back of the 30S subunit body where it stabilizes the conformation of the head with respect to the body. This chain is Small ribosomal subunit protein uS5, found in Aliivibrio fischeri (strain ATCC 700601 / ES114) (Vibrio fischeri).